Here is a 325-residue protein sequence, read N- to C-terminus: Glutarate 2-hydroxylase (325 aa).

3 residues coordinate Fe cation: His160, Asp162, and His292.

This sequence belongs to the glutarate hydroxylase family. As to quaternary structure, homotetramer. Fe(2+) is required as a cofactor.

It carries out the reaction glutarate + 2-oxoglutarate + O2 = (S)-2-hydroxyglutarate + succinate + CO2. The protein operates within amino-acid degradation. Acts as an alpha-ketoglutarate-dependent dioxygenase catalyzing hydroxylation of glutarate (GA) to L-2-hydroxyglutarate (L2HG). Functions in a L-lysine degradation pathway that proceeds via cadaverine, glutarate and L-2-hydroxyglutarate. This Escherichia coli O17:K52:H18 (strain UMN026 / ExPEC) protein is Glutarate 2-hydroxylase.